The chain runs to 78 residues: RNA-binding protein Hfq (78 aa).

Residues 10–70 (DLFLNSVRKQ…ISTIMPSQPV (61 aa)) enclose the Sm domain.

It belongs to the Hfq family. Homohexamer.

Its function is as follows. RNA chaperone that binds small regulatory RNA (sRNAs) and mRNAs to facilitate mRNA translational regulation in response to envelope stress, environmental stress and changes in metabolite concentrations. Also binds with high specificity to tRNAs. This Brucella abortus (strain S19) protein is RNA-binding protein Hfq.